A 357-amino-acid polypeptide reads, in one-letter code: Glycerol-3-phosphate dehydrogenase [NAD(P)+] (357 aa).

Ser30, Phe31, Arg51, and Lys124 together coordinate NADPH. The sn-glycerol 3-phosphate site is built by Lys124 and Gly152. Ala156 serves as a coordination point for NADPH. Residues Lys207, Asp260, Ser270, Arg271, and Asn272 each coordinate sn-glycerol 3-phosphate. The active-site Proton acceptor is the Lys207. Position 271 (Arg271) interacts with NADPH. Glu297 lines the NADPH pocket.

It belongs to the NAD-dependent glycerol-3-phosphate dehydrogenase family.

The protein resides in the cytoplasm. The enzyme catalyses sn-glycerol 3-phosphate + NAD(+) = dihydroxyacetone phosphate + NADH + H(+). The catalysed reaction is sn-glycerol 3-phosphate + NADP(+) = dihydroxyacetone phosphate + NADPH + H(+). It functions in the pathway membrane lipid metabolism; glycerophospholipid metabolism. Catalyzes the reduction of the glycolytic intermediate dihydroxyacetone phosphate (DHAP) to sn-glycerol 3-phosphate (G3P), the key precursor for phospholipid synthesis. The chain is Glycerol-3-phosphate dehydrogenase [NAD(P)+] from Acinetobacter baumannii (strain AB307-0294).